A 153-amino-acid polypeptide reads, in one-letter code: Large ribosomal subunit protein uL30 (153 aa).

This sequence belongs to the universal ribosomal protein uL30 family. As to quaternary structure, part of the 50S ribosomal subunit.

The protein is Large ribosomal subunit protein uL30 of Methanoculleus marisnigri (strain ATCC 35101 / DSM 1498 / JR1).